A 615-amino-acid polypeptide reads, in one-letter code: MGGVCSCVFKDDDKKKKLRSNDDDKSRGFSGKLKSMRRSKTSDSYYSDNYGGSRRKSSKPDEVVFNFSGELGPMPPLRNDSTKFMQRNSFMGRAGVMGLEKAVEVLDTLGSSMTRMNPSNAYLSGVTSSRGGKVTILAFEVANTIAKGAALLQSLSEENLKFMKKDMLHSEEVKKLVSTDTTELQILAASDKREELDLFSGEVIRFGNMCKDLQWHNLDRYFMKLDTENSQHKLLKDDAEARMQELVTLARITSELYHELQALDRFEQDYRRKLAEVESLNLPRRGEGIVILQNELKQQKKLVKSLQKKSLWSQNLAEIIEKLVDVVSYIRQTIVEVFGNNGLRDNEGEQGRERLGEAGLSLHYANLIQQIDNIASRPSSLPSNVRDTLYNALPATVKTALRPRLQTLDQEEELSVPEIKAEMEKSLQWLVPFAENTTKAHQGFGWVGEWANSRIEFGKGKGKGENNGNPTRLQTLHHADKPIVDSYVLELVVWLHRLMKSSKKRAHGVKLQETNHVSPPNNRTISNTQLSLSPDFTYKNQLSLEDRLLLDRVQSIRFGPNLSKSQELVGLKKNKKGFKIWALSRSTGNSPKVDLSDKNSSSDLDVLDGLDFAFQ.

Glycine 2 is lipidated: N-myristoyl glycine. Residues 16-27 are compositionally biased toward basic and acidic residues; that stretch reads KKLRSNDDDKSR. 2 disordered regions span residues 16–59 and 506–529; these read KKLR…KSSK and AHGV…SNTQ. Positions 42 to 52 are enriched in low complexity; that stretch reads SDSYYSDNYGG. Residues 512-529 show a composition bias toward polar residues; the sequence is QETNHVSPPNNRTISNTQ.

The protein resides in the nucleus. Functionally, promotes seedling growth probably via the regulation of phytosulfokine (PSK) signaling; PSK are peptide phytohormones acting as growth factors. Involved in PSK-induced root growth. Together with PSI1 and PSI3, required during vegetative growth and reproduction. This Arabidopsis thaliana (Mouse-ear cress) protein is Protein PSK SIMULATOR 2.